The chain runs to 512 residues: Bifunctional purine biosynthesis protein PurH (512 aa).

In terms of domain architecture, MGS-like spans 1 to 146 (MTIKRALISV…KNHQDVTVIV (146 aa)).

Belongs to the PurH family.

The catalysed reaction is (6R)-10-formyltetrahydrofolate + 5-amino-1-(5-phospho-beta-D-ribosyl)imidazole-4-carboxamide = 5-formamido-1-(5-phospho-D-ribosyl)imidazole-4-carboxamide + (6S)-5,6,7,8-tetrahydrofolate. It catalyses the reaction IMP + H2O = 5-formamido-1-(5-phospho-D-ribosyl)imidazole-4-carboxamide. Its pathway is purine metabolism; IMP biosynthesis via de novo pathway; 5-formamido-1-(5-phospho-D-ribosyl)imidazole-4-carboxamide from 5-amino-1-(5-phospho-D-ribosyl)imidazole-4-carboxamide (10-formyl THF route): step 1/1. It functions in the pathway purine metabolism; IMP biosynthesis via de novo pathway; IMP from 5-formamido-1-(5-phospho-D-ribosyl)imidazole-4-carboxamide: step 1/1. The sequence is that of Bifunctional purine biosynthesis protein PurH from Bacillus subtilis (strain 168).